The following is a 324-amino-acid chain: tRNA(Ile)-lysidine synthase (324 aa).

Residue 33 to 38 (SGGPDS) participates in ATP binding.

This sequence belongs to the tRNA(Ile)-lysidine synthase family.

It is found in the cytoplasm. The catalysed reaction is cytidine(34) in tRNA(Ile2) + L-lysine + ATP = lysidine(34) in tRNA(Ile2) + AMP + diphosphate + H(+). In terms of biological role, ligates lysine onto the cytidine present at position 34 of the AUA codon-specific tRNA(Ile) that contains the anticodon CAU, in an ATP-dependent manner. Cytidine is converted to lysidine, thus changing the amino acid specificity of the tRNA from methionine to isoleucine. This is tRNA(Ile)-lysidine synthase from Thermobifida fusca (strain YX).